A 443-amino-acid polypeptide reads, in one-letter code: ATP-dependent protease ATPase subunit HslU (443 aa).

Residues Ile-18, 60–65 (GVGKTE), Asp-256, Glu-321, and Arg-393 each bind ATP.

The protein belongs to the ClpX chaperone family. HslU subfamily. In terms of assembly, a double ring-shaped homohexamer of HslV is capped on each side by a ring-shaped HslU homohexamer. The assembly of the HslU/HslV complex is dependent on binding of ATP.

Its subcellular location is the cytoplasm. Functionally, ATPase subunit of a proteasome-like degradation complex; this subunit has chaperone activity. The binding of ATP and its subsequent hydrolysis by HslU are essential for unfolding of protein substrates subsequently hydrolyzed by HslV. HslU recognizes the N-terminal part of its protein substrates and unfolds these before they are guided to HslV for hydrolysis. This is ATP-dependent protease ATPase subunit HslU from Buchnera aphidicola subsp. Acyrthosiphon pisum (strain APS) (Acyrthosiphon pisum symbiotic bacterium).